The sequence spans 240 residues: Probable septum site-determining protein MinC (240 aa).

The protein belongs to the MinC family. Interacts with MinD and FtsZ.

Cell division inhibitor that blocks the formation of polar Z ring septums. Rapidly oscillates between the poles of the cell to destabilize FtsZ filaments that have formed before they mature into polar Z rings. Prevents FtsZ polymerization. This is Probable septum site-determining protein MinC from Acinetobacter baumannii (strain ATCC 17978 / DSM 105126 / CIP 53.77 / LMG 1025 / NCDC KC755 / 5377).